We begin with the raw amino-acid sequence, 197 residues long: uncharacterized protein (197 aa).

4 helical membrane-spanning segments follow: residues 9–29 (IYILQTLGSLYLLIVLLRFIL), 67–87 (LASLVLAILIQLVLMILILML), 104–124 (IIAVTSLFLKVFFFALIISVI), and 160–180 (GLDLSPIFAFLALKLIDMLVI).

It belongs to the YggT family.

Its subcellular location is the cell membrane. This is an uncharacterized protein from Pseudomonas aeruginosa (strain ATCC 15692 / DSM 22644 / CIP 104116 / JCM 14847 / LMG 12228 / 1C / PRS 101 / PAO1).